Reading from the N-terminus, the 864-residue chain is Receptor like protein 24 (864 aa).

A signal peptide spans 1–29 (MKTVFKSLLLLHFLLLLLLCFVSPSSFFL). Residues 30 to 830 (LKVPVGGLVA…EEKGEVINWK (801 aa)) are Extracellular-facing. Asn-61, Asn-73, Asn-94, and Asn-112 each carry an N-linked (GlcNAc...) asparagine glycan. LRR repeat units lie at residues 100–125 (FHQL…FCNL), 127–148 (KLKL…DLMG), 156–182 (LGKL…LFEL), 183–205 (HSLR…KFGN), 207–229 (NKLE…TISN), 230–253 (LTRI…VQNL), 254–277 (TKLS…LFTF), 279–303 (SLST…STSS), 305–326 (LEIM…ISKL), 327–350 (INLK…LLSP), 351–376 (LKSL…SYIP), 378–398 (SMES…ILKH), 399–423 (LQNL…LWTL), 425–448 (QLSF…VFVN), and 449–472 (LSVR…PLSI). 4 N-linked (GlcNAc...) asparagine glycosylation sites follow: Asn-176, Asn-194, Asn-229, and Asn-252. A glycan (N-linked (GlcNAc...) asparagine) is linked at Asn-298. Asn-338 is a glycosylation site (N-linked (GlcNAc...) asparagine). 2 N-linked (GlcNAc...) asparagine glycosylation sites follow: Asn-433 and Asn-448. An LRR 16; degenerate repeat occupies 473-492 (IGFSAIHNSFTGEIPLSICN). 2 N-linked (GlcNAc...) asparagine glycosylation sites follow: Asn-492 and Asn-505. LRR repeat units follow at residues 493–514 (RTSL…PQCL), 515–538 (SNFM…FYTD), 539–562 (SSLK…LLNC), 564–585 (SLRF…WLKA), 586–610 (LPNL…HQGP), 613–637 (FPEL…FFVN), 688–712 (LTSY…IGLL), 713–735 (KALI…SFAN), 736–760 (LMNL…LGSL), and 762–785 (FLVY…QITG). A glycan (N-linked (GlcNAc...) asparagine) is linked at Asn-561. Asn-719 carries N-linked (GlcNAc...) asparagine glycosylation. A helical membrane pass occupies residues 831–851 (AVAIGYAPGLLFGLAIAHLIA). At 852–864 (SYKPEWLVKIIGF) the chain is on the cytoplasmic side.

Belongs to the RLP family.

Its subcellular location is the cell membrane. The chain is Receptor like protein 24 from Arabidopsis thaliana (Mouse-ear cress).